The following is a 130-amino-acid chain: Mediator of RNA polymerase II transcription subunit 31 (130 aa).

This sequence belongs to the Mediator complex subunit 31 family. In terms of assembly, component of the Mediator complex.

It localises to the nucleus. Its function is as follows. Component of the Mediator complex, a coactivator involved in the regulated transcription of nearly all RNA polymerase II-dependent genes. Mediator functions as a bridge to convey information from gene-specific regulatory proteins to the basal RNA polymerase II transcription machinery. Mediator is recruited to promoters by direct interactions with regulatory proteins and serves as a scaffold for the assembly of a functional preinitiation complex with RNA polymerase II and the general transcription factors. The polypeptide is Mediator of RNA polymerase II transcription subunit 31 (SOH1) (Candida glabrata (strain ATCC 2001 / BCRC 20586 / JCM 3761 / NBRC 0622 / NRRL Y-65 / CBS 138) (Yeast)).